A 37-amino-acid chain; its full sequence is Large ribosomal subunit protein bL36 (37 aa).

Belongs to the bacterial ribosomal protein bL36 family.

In Prochlorococcus marinus (strain MIT 9313), this protein is Large ribosomal subunit protein bL36.